The following is a 254-amino-acid chain: Putative epimerase LsrE (254 aa).

A helical transmembrane segment spans residues 14–34; the sequence is VALLASYPLSVGILAGQWIAL. H50, D52, and H81 together coordinate a divalent metal cation. Residue D52 is the Proton acceptor of the active site. Residues H81, 166 to 169, 199 to 201, and 221 to 222 each bind substrate; these read GYGS, DGS, and GS. D199 contacts a divalent metal cation. D199 (proton donor) is an active-site residue.

The protein belongs to the ribulose-phosphate 3-epimerase family. A divalent metal cation serves as cofactor.

The protein localises to the cell membrane. This Salmonella choleraesuis (strain SC-B67) protein is Putative epimerase LsrE (lsrE).